The chain runs to 198 residues: Putative nitroreductase MJ1384 (198 aa).

This sequence belongs to the nitroreductase family. It depends on FMN as a cofactor.

The chain is Putative nitroreductase MJ1384 from Methanocaldococcus jannaschii (strain ATCC 43067 / DSM 2661 / JAL-1 / JCM 10045 / NBRC 100440) (Methanococcus jannaschii).